The primary structure comprises 901 residues: Probable dipeptidyl-aminopeptidase B (901 aa).

The segment covering 1–22 (MSSPRPSTSSTSSDSGLSVDTT) has biased composition (low complexity). The segment at 1–67 (MSSPRPSTSS…EPFLPSAKKQ (67 aa)) is disordered. The Cytoplasmic portion of the chain corresponds to 1-76 (MSSPRPSTSS…QAASGSRTSR (76 aa)). Residues 77-97 (LIWGLVILCVAGWLWGLVLFV) traverse the membrane as a helical; Signal-anchor for type II membrane protein segment. The Vacuolar segment spans residues 98–901 (TQNRSAQQSV…VKRSLPMLVK (804 aa)). Residues N334 and N625 are each glycosylated (N-linked (GlcNAc...) asparagine). S739 acts as the Charge relay system in catalysis. The N-linked (GlcNAc...) asparagine glycan is linked to N793. Active-site charge relay system residues include D816 and H849.

The protein belongs to the peptidase S9B family.

The protein resides in the vacuole membrane. The catalysed reaction is Release of an N-terminal dipeptide, Xaa-Yaa-|-Zaa-, from a polypeptide, preferentially when Yaa is Pro, provided Zaa is neither Pro nor hydroxyproline.. Type IV dipeptidyl-peptidase which removes N-terminal dipeptides sequentially from polypeptides having unsubstituted N-termini provided that the penultimate residue is proline. The protein is Probable dipeptidyl-aminopeptidase B (dapB) of Aspergillus niger (strain ATCC MYA-4892 / CBS 513.88 / FGSC A1513).